The sequence spans 303 residues: Bifunctional protein FolD (303 aa).

NADP(+)-binding positions include 165-167 (GRS), S190, and I231.

It belongs to the tetrahydrofolate dehydrogenase/cyclohydrolase family. Homodimer.

The enzyme catalyses (6R)-5,10-methylene-5,6,7,8-tetrahydrofolate + NADP(+) = (6R)-5,10-methenyltetrahydrofolate + NADPH. It carries out the reaction (6R)-5,10-methenyltetrahydrofolate + H2O = (6R)-10-formyltetrahydrofolate + H(+). Its pathway is one-carbon metabolism; tetrahydrofolate interconversion. In terms of biological role, catalyzes the oxidation of 5,10-methylenetetrahydrofolate to 5,10-methenyltetrahydrofolate and then the hydrolysis of 5,10-methenyltetrahydrofolate to 10-formyltetrahydrofolate. The chain is Bifunctional protein FolD from Prochlorococcus marinus (strain NATL1A).